Reading from the N-terminus, the 943-residue chain is Leucine--tRNA ligase (943 aa).

A 'HIGH' region motif is present at residues 40–51 (PYPSGAGLHVGH). Positions 717-721 (KMSKS) match the 'KMSKS' region motif. An ATP-binding site is contributed by lysine 720.

Belongs to the class-I aminoacyl-tRNA synthetase family.

It is found in the cytoplasm. The enzyme catalyses tRNA(Leu) + L-leucine + ATP = L-leucyl-tRNA(Leu) + AMP + diphosphate. In Bacteroides fragilis (strain YCH46), this protein is Leucine--tRNA ligase.